We begin with the raw amino-acid sequence, 49 residues long: Large ribosomal subunit protein eL40 (49 aa).

This sequence belongs to the eukaryotic ribosomal protein eL40 family.

The sequence is that of Large ribosomal subunit protein eL40 from Methanosarcina acetivorans (strain ATCC 35395 / DSM 2834 / JCM 12185 / C2A).